A 199-amino-acid polypeptide reads, in one-letter code: Recombination protein RecR (199 aa).

The C4-type zinc-finger motif lies at 56–71; sequence CQQCNNYTEQTLCALC. Residues 79-174 form the Toprim domain; sequence TLLCVVESPA…NISQLAHGIP (96 aa).

It belongs to the RecR family.

Functionally, may play a role in DNA repair. It seems to be involved in an RecBC-independent recombinational process of DNA repair. It may act with RecF and RecO. This is Recombination protein RecR from Legionella pneumophila subsp. pneumophila (strain Philadelphia 1 / ATCC 33152 / DSM 7513).